Consider the following 47-residue polypeptide: MKKLRWVLLIVIIAGCLLLWTQMLNVMCDQDVQFFSGICTINKFIPW.

A helical membrane pass occupies residues 6–26 (WVLLIVIIAGCLLLWTQMLNV).

Belongs to the MgrB family. May form homooligomers. Probably interacts with the periplasmic domain of PhoQ.

It is found in the cell inner membrane. Its function is as follows. PhoP-regulated transcription is redox-sensitive, being activated when the periplasm becomes more reducing. MgrB acts between DsbA/DsbB and PhoP/PhoQ in this pathway. Represses PhoP/PhoQ signaling, possibly by binding to the periplasmic domain of PhoQ, altering its activity and that of downstream effector PhoP. This chain is PhoP/PhoQ regulator MgrB, found in Klebsiella pneumoniae (strain 342).